A 102-amino-acid chain; its full sequence is Parathymosin (102 aa).

Positions 1-102 (MSEKSVEAAA…RQKTENGASA (102 aa)) are disordered. Position 2 is an N-acetylserine (serine 2). Phosphoserine is present on serine 2. Lysine 4 carries the N6-acetyllysine modification. Residues serine 5 and serine 13 each carry the phosphoserine modification. Positions 13–37 (SAKDLKEKKEKVEEKASRKERKKEV) are enriched in basic and acidic residues. Lysine 15 is modified (N6-acetyllysine). Residues 38-76 (VEEEENGAEEEEEETAEDGEEEDEGEEEDEEEEEEDDEG) show a composition bias toward acidic residues. Phosphothreonine is present on threonine 52. Position 92 is an N6-acetyllysine (lysine 92).

This sequence belongs to the pro/parathymosin family.

Parathymosin may mediate immune function by blocking the effect of prothymosin alpha which confers resistance to certain opportunistic infections. The sequence is that of Parathymosin (PTMS) from Homo sapiens (Human).